We begin with the raw amino-acid sequence, 336 residues long: Gastrula zinc finger protein XlCGF57.1 (336 aa).

C2H2-type zinc fingers lie at residues 6-28 (YTCT…MKIH), 34-56 (FICT…MKTH), 62-84 (FTCT…LTIH), 90-112 (FSCT…MKTH), 118-140 (FTCT…MKTH), 146-168 (FTCT…LKIH), 174-196 (FTCT…LKIH), 202-224 (FTCT…MKIH), 230-252 (FSCT…LTMH), 258-280 (FTCT…TKIH), and 286-308 (FSCT…LKIH).

It belongs to the krueppel C2H2-type zinc-finger protein family.

It is found in the nucleus. Its function is as follows. May be involved in transcriptional regulation. The polypeptide is Gastrula zinc finger protein XlCGF57.1 (Xenopus laevis (African clawed frog)).